Consider the following 484-residue polypeptide: Putative beta-barrel assembly-enhancing protease (484 aa).

The N-terminal stretch at 1–23 (MKFFPTRTLLCLCIAAPCLPAIA) is a signal peptide. Position 133 (His-133) interacts with Zn(2+). Glu-134 is a catalytic residue. Residues His-137 and Glu-198 each coordinate Zn(2+). The active-site Proton donor is Asp-202. 4 TPR repeats span residues 307 to 340 (PSIQ…QPDN), 341 to 374 (HFYL…TPNN), 376 to 408 (VLTI…NPND), and 426 to 459 (AEDL…VELG).

It belongs to the peptidase M48 family. BepA subfamily. Zn(2+) is required as a cofactor.

The protein localises to the periplasm. Functionally, functions both as a chaperone and a metalloprotease. Maintains the integrity of the outer membrane by promoting either the assembly or the elimination of outer membrane proteins, depending on their folding state. The polypeptide is Putative beta-barrel assembly-enhancing protease (Vibrio cholerae serotype O1 (strain ATCC 39315 / El Tor Inaba N16961)).